The chain runs to 614 residues: Acetylcholinesterase (614 aa).

An N-terminal signal peptide occupies residues 1 to 31; sequence MRPPWYPLHTPSLAFPLLFLLLSLLGGGARA. C100 and C127 are joined by a disulfide. S234 functions as the Acyl-ester intermediate in the catalytic mechanism. A disulfide bond links C288 and C303. N-linked (GlcNAc...) asparagine glycosylation is present at N296. The Charge relay system role is filled by E365. A glycan (N-linked (GlcNAc...) asparagine) is linked at N381. C440 and C560 are joined by a disulfide. The active-site Charge relay system is H478. The N-linked (GlcNAc...) asparagine glycan is linked to N495.

Belongs to the type-B carboxylesterase/lipase family. As to quaternary structure, isoform H generates GPI-anchored dimers; disulfide linked. Isoform T generates multiple structures, ranging from monomers and dimers to collagen-tailed and hydrophobic-tailed forms, in which catalytic tetramers are associated with anchoring proteins that attach them to the basal lamina or to cell membranes. In the collagen-tailed forms, isoform T subunits are associated with a specific collagen, COLQ, which triggers the formation of isoform T tetramers, from monomers and dimers. Interacts with PRIMA1. The interaction with PRIMA1 is required to anchor it to the basal lamina of cells and organize into tetramers. In terms of tissue distribution, predominates in most expressing tissues except erythrocytes where a glycophospholipid-attached form of ACHE predominates.

It is found in the synapse. It localises to the secreted. The protein localises to the cell membrane. It carries out the reaction acetylcholine + H2O = choline + acetate + H(+). Its function is as follows. Terminates signal transduction at the neuromuscular junction by rapid hydrolysis of the acetylcholine released into the synaptic cleft. This is Acetylcholinesterase (Ache) from Mus musculus (Mouse).